The following is a 266-amino-acid chain: Tryptophan synthase alpha chain (266 aa).

Active-site proton acceptor residues include Glu49 and Asp60.

This sequence belongs to the TrpA family. In terms of assembly, tetramer of two alpha and two beta chains.

It carries out the reaction (1S,2R)-1-C-(indol-3-yl)glycerol 3-phosphate + L-serine = D-glyceraldehyde 3-phosphate + L-tryptophan + H2O. It participates in amino-acid biosynthesis; L-tryptophan biosynthesis; L-tryptophan from chorismate: step 5/5. In terms of biological role, the alpha subunit is responsible for the aldol cleavage of indoleglycerol phosphate to indole and glyceraldehyde 3-phosphate. This is Tryptophan synthase alpha chain from Thioalkalivibrio sulfidiphilus (strain HL-EbGR7).